An 85-amino-acid polypeptide reads, in one-letter code: UPF0386 protein HNE_3437 (85 aa).

It belongs to the UPF0386 family.

This chain is UPF0386 protein HNE_3437, found in Hyphomonas neptunium (strain ATCC 15444).